A 249-amino-acid polypeptide reads, in one-letter code: 2-C-methyl-D-erythritol 4-phosphate cytidylyltransferase (249 aa).

This sequence belongs to the IspD/TarI cytidylyltransferase family. IspD subfamily.

The enzyme catalyses 2-C-methyl-D-erythritol 4-phosphate + CTP + H(+) = 4-CDP-2-C-methyl-D-erythritol + diphosphate. The protein operates within isoprenoid biosynthesis; isopentenyl diphosphate biosynthesis via DXP pathway; isopentenyl diphosphate from 1-deoxy-D-xylulose 5-phosphate: step 2/6. In terms of biological role, catalyzes the formation of 4-diphosphocytidyl-2-C-methyl-D-erythritol from CTP and 2-C-methyl-D-erythritol 4-phosphate (MEP). The polypeptide is 2-C-methyl-D-erythritol 4-phosphate cytidylyltransferase (Shewanella oneidensis (strain ATCC 700550 / JCM 31522 / CIP 106686 / LMG 19005 / NCIMB 14063 / MR-1)).